Consider the following 312-residue polypeptide: MTMKRKKISVIGAGFTGATTAFILAQKELGDVVLVDIPQLENPTKGKALDMLESSPVLGFDANIIGTSDYADTADSDIVVITAGIARKPGMSRDDLVTTNQKIMKQVTKEVVKYSPNCYIIVLTNPVDAMTYTVFKESGFPKNRVIGQSGVLDTARFRTFVAQELNISVKDVTGFVLGGHGDDMVPLVRYSYAGGIPLEKLIPKDRLDAIVERTRKGGGEIVNLLGNGSAYYAPAASLAEMVEAIIKDQRRILPAIAYLEGEYGYEGIYLGVPTILGGNGIEKVIELELTEEEKAALAKSVESVKNVMRVLE.

Residues 12 to 17 and D36 each bind NAD(+); that span reads GAGFTG. Positions 87 and 93 each coordinate substrate. NAD(+)-binding positions include N100 and 123–125; that span reads LTN. Position 125 (N125) interacts with substrate. S149 is modified (phosphoserine). R156 contacts substrate. H180 serves as the catalytic Proton acceptor.

Belongs to the LDH/MDH superfamily. MDH type 3 family.

The enzyme catalyses (S)-malate + NAD(+) = oxaloacetate + NADH + H(+). Catalyzes the reversible oxidation of malate to oxaloacetate. In Geobacillus sp. (strain WCH70), this protein is Malate dehydrogenase.